The chain runs to 395 residues: Chaperone protein DnaJ (395 aa).

The J domain occupies 4–69; the sequence is DYYEVLGLSR…DKRRRYDQFG (66 aa). Residues 151 to 232 form a CR-type zinc finger; sequence GVEKTLKIKK…CYGEGIKQGE (82 aa). Positions 164, 167, 180, 183, 206, 209, 220, and 223 each coordinate Zn(2+). 4 CXXCXGXG motif repeats span residues 164 to 171, 180 to 187, 206 to 213, and 220 to 227; these read CTECNGTG, CPTCHGSG, CPTCGGEG, and CVSCYGEG.

Belongs to the DnaJ family. Homodimer. It depends on Zn(2+) as a cofactor.

It localises to the cytoplasm. Its function is as follows. Participates actively in the response to hyperosmotic and heat shock by preventing the aggregation of stress-denatured proteins and by disaggregating proteins, also in an autonomous, DnaK-independent fashion. Unfolded proteins bind initially to DnaJ; upon interaction with the DnaJ-bound protein, DnaK hydrolyzes its bound ATP, resulting in the formation of a stable complex. GrpE releases ADP from DnaK; ATP binding to DnaK triggers the release of the substrate protein, thus completing the reaction cycle. Several rounds of ATP-dependent interactions between DnaJ, DnaK and GrpE are required for fully efficient folding. Also involved, together with DnaK and GrpE, in the DNA replication of plasmids through activation of initiation proteins. The sequence is that of Chaperone protein DnaJ from Chlorobium phaeobacteroides (strain DSM 266 / SMG 266 / 2430).